The chain runs to 349 residues: GDP-mannose:glycolipid 4-beta-D-mannosyltransferase (349 aa).

An N-terminal signal peptide occupies residues 1–14 (MSASASLPVTRAAA).

The protein belongs to the glycosyltransferase 94 family.

The protein localises to the cell inner membrane. The catalysed reaction is beta-D-GlcA-(1-&gt;2)-alpha-D-Man-(1-&gt;3)-beta-D-Glc-(1-&gt;4)-alpha-D-Glc-di-trans,octa-cis-undecaprenyl diphosphate + GDP-alpha-D-mannose = beta-D-Man-(1-&gt;4)-beta-D-GlcA-(1-&gt;2)-alpha-D-Man-(1-&gt;3)-beta-D-Glc-(1-&gt;4)-alpha-D-Glc-di-trans,octa-cis-undecaprenyl diphosphate + GDP + H(+). It functions in the pathway glycan biosynthesis; xanthan biosynthesis. Functionally, nonprocessive beta-mannosyltransferase that catalyzes the transfer of a mannose residue from GDP-mannose to glucuronic acid-beta-1,2-mannose-alpha-1,3-glucose-beta-1,4-glucose-PP-polyisoprenyl to form the lipid-linked pentasaccharide repeating unit of xanthan, Man-GlcA-Man-Glc(2)-PP-Pol. Is involved in the biosynthesis of the exopolysaccharide xanthan. The protein is GDP-mannose:glycolipid 4-beta-D-mannosyltransferase (gumI) of Xanthomonas campestris pv. campestris (strain ATCC 33913 / DSM 3586 / NCPPB 528 / LMG 568 / P 25).